A 556-amino-acid chain; its full sequence is Optineurin (556 aa).

The interval Met1–Ser33 is disordered. The segment covering Glu11–Asn22 has biased composition (basic and acidic residues). The stretch at Glu38–Ala164 forms a coiled coil. The LIR signature appears at Asp168–Ile173. The stretch at Val219 to Asp487 forms a coiled coil. Residues Glu245–Ile274 form a disordered region. A compositionally biased stretch (polar residues) spans Glu253–Asn265. Residues Asp453–Arg458 carry the UBAN motif. Residues Met496–Pro524 are disordered. Residues Gln526–Asn556 form a CCHC NOA-type zinc finger. Zn(2+) is bound by residues Cys534, Cys537, His550, and Cys554.

In terms of assembly, binds to linear ubiquitin chains. Interacts with LC3 family members. Expressed in erythrocytes, skeletal muscle, heart, spleen and brain. Weakly expressed in lung and liver (at protein level).

Its subcellular location is the cytoplasm. It localises to the perinuclear region. It is found in the golgi apparatus. The protein resides in the trans-Golgi network. The protein localises to the cytoplasmic vesicle. Its subcellular location is the recycling endosome. It localises to the autophagosome. Probably part of the TNF-alpha signaling pathway that can shift the equilibrium toward induction of cell death. May act by regulating membrane trafficking and cellular morphogenesis. May act as autophagy receptor that interacts directly with both the cargo to become degraded and an autophagy modifier of the MAP1 LC3 family. The protein is Optineurin (OPTN) of Gallus gallus (Chicken).